Reading from the N-terminus, the 171-residue chain is Co-chaperone protein HscB homolog (171 aa).

The region spanning 2–74 (NHFELFGLPP…ISRAEYLLSQ (73 aa)) is the J domain.

Belongs to the HscB family. As to quaternary structure, interacts with HscA and stimulates its ATPase activity.

Co-chaperone involved in the maturation of iron-sulfur cluster-containing proteins. Seems to help targeting proteins to be folded toward HscA. This is Co-chaperone protein HscB homolog from Vibrio vulnificus (strain CMCP6).